The following is a 202-amino-acid chain: Dephospho-CoA kinase (202 aa).

The DPCK domain maps to 3–200 (TIGLTGGIGS…QRYLTLAANR (198 aa)). 11–16 (GSGKSA) provides a ligand contact to ATP.

The protein belongs to the CoaE family.

It localises to the cytoplasm. The catalysed reaction is 3'-dephospho-CoA + ATP = ADP + CoA + H(+). The protein operates within cofactor biosynthesis; coenzyme A biosynthesis; CoA from (R)-pantothenate: step 5/5. Its function is as follows. Catalyzes the phosphorylation of the 3'-hydroxyl group of dephosphocoenzyme A to form coenzyme A. The chain is Dephospho-CoA kinase from Thiobacillus denitrificans (strain ATCC 25259 / T1).